The chain runs to 212 residues: Thymidylate kinase (212 aa).

10–17 (GPEGAGKT) contributes to the ATP binding site.

It belongs to the thymidylate kinase family.

It catalyses the reaction dTMP + ATP = dTDP + ADP. In terms of biological role, phosphorylation of dTMP to form dTDP in both de novo and salvage pathways of dTTP synthesis. This chain is Thymidylate kinase, found in Bacillus velezensis (strain DSM 23117 / BGSC 10A6 / LMG 26770 / FZB42) (Bacillus amyloliquefaciens subsp. plantarum).